A 669-amino-acid polypeptide reads, in one-letter code: Protein fem-1 homolog A (669 aa).

ANK repeat units lie at residues Asp-2 to Leu-31, Gly-40 to Ala-70, Glu-82 to Arg-111, Thr-115 to Val-145, His-149 to Arg-178, Lys-182 to Arg-211, and Tyr-214 to Gln-243. At Ser-108 the chain carries Phosphoserine. Positions Gly-240–Glu-278 are disordered. 2 TPR repeats span residues Val-298–Gly-332 and Ser-390–Asn-423. ANK repeat units follow at residues Asn-534–Ser-576 and Asp-580–Ala-609.

It belongs to the fem-1 family. Component of a CRL2 E3 ubiquitin-protein ligase complex, also named ECS (Elongin BC-CUL2/5-SOCS-box protein) complex, composed of CUL2, Elongin BC (ELOB and ELOC), RBX1 and substrate-specific adapter FEM1A. Interacts with PTGER4. Interacts with NFKB1; the interaction is direct. In terms of processing, phosphorylated; highly phosphorylated in myoblasts and myotubes. Phosphorylation at Ser-108 promotes PGE2-EP4-mediated inhibition of inflammation. Dephosphorylated by protein phosphatase 2A (PP2A). In terms of tissue distribution, present in macrophages derived from peripheral blood monocytes. Also present in atheromata (at protein level).

The protein localises to the mitochondrion. Its subcellular location is the cytoplasm. The protein operates within protein modification; protein ubiquitination. In terms of biological role, substrate-recognition component of a Cul2-RING (CRL2) E3 ubiquitin-protein ligase complex of the DesCEND (destruction via C-end degrons) pathway, which recognizes a C-degron located at the extreme C terminus of target proteins, leading to their ubiquitination and degradation. The C-degron recognized by the DesCEND pathway is usually a motif of less than ten residues and can be present in full-length proteins, truncated proteins or proteolytically cleaved forms. The CRL2(FEM1A) complex specifically recognizes proteins with an arginine at the C-terminus: recognizes and binds proteins ending with -Lys/Arg-Xaa-Arg and -Lys/Arg-Xaa-Xaa-Arg C-degrons, such as SIL1 or OR51B2, leading to their ubiquitination and degradation. Promotes ubiquitination and degradation of SLBP. Involved in PGE2-EP4-mediated inhibition of inflammation of macrophages via interaction with NFKB1 and PTGER4. Promotes inflammation in brain microglia through MAP2K4/MKK4-mediated signaling. The protein is Protein fem-1 homolog A of Homo sapiens (Human).